The primary structure comprises 183 residues: Adenine phosphoribosyltransferase (183 aa).

It belongs to the purine/pyrimidine phosphoribosyltransferase family. In terms of assembly, homodimer.

The protein resides in the cytoplasm. It carries out the reaction AMP + diphosphate = 5-phospho-alpha-D-ribose 1-diphosphate + adenine. It functions in the pathway purine metabolism; AMP biosynthesis via salvage pathway; AMP from adenine: step 1/1. In terms of biological role, catalyzes a salvage reaction resulting in the formation of AMP, that is energically less costly than de novo synthesis. This Shewanella oneidensis (strain ATCC 700550 / JCM 31522 / CIP 106686 / LMG 19005 / NCIMB 14063 / MR-1) protein is Adenine phosphoribosyltransferase.